A 359-amino-acid chain; its full sequence is DNA replication and repair protein RecF (359 aa).

Residue 30 to 37 (GKNGIGKT) participates in ATP binding.

Belongs to the RecF family.

It localises to the cytoplasm. In terms of biological role, the RecF protein is involved in DNA metabolism; it is required for DNA replication and normal SOS inducibility. RecF binds preferentially to single-stranded, linear DNA. It also seems to bind ATP. In Flavobacterium johnsoniae (strain ATCC 17061 / DSM 2064 / JCM 8514 / BCRC 14874 / CCUG 350202 / NBRC 14942 / NCIMB 11054 / UW101) (Cytophaga johnsonae), this protein is DNA replication and repair protein RecF.